The primary structure comprises 264 residues: Thiazole synthase (264 aa).

Lys-106 serves as the catalytic Schiff-base intermediate with DXP. Residues Gly-167, 193–194, and 215–216 each bind 1-deoxy-D-xylulose 5-phosphate; these read AG and NT.

It belongs to the ThiG family. In terms of assembly, homotetramer. Forms heterodimers with either ThiH or ThiS.

The protein localises to the cytoplasm. The catalysed reaction is [ThiS sulfur-carrier protein]-C-terminal-Gly-aminoethanethioate + 2-iminoacetate + 1-deoxy-D-xylulose 5-phosphate = [ThiS sulfur-carrier protein]-C-terminal Gly-Gly + 2-[(2R,5Z)-2-carboxy-4-methylthiazol-5(2H)-ylidene]ethyl phosphate + 2 H2O + H(+). The protein operates within cofactor biosynthesis; thiamine diphosphate biosynthesis. Functionally, catalyzes the rearrangement of 1-deoxy-D-xylulose 5-phosphate (DXP) to produce the thiazole phosphate moiety of thiamine. Sulfur is provided by the thiocarboxylate moiety of the carrier protein ThiS. In vitro, sulfur can be provided by H(2)S. The protein is Thiazole synthase of Xylella fastidiosa (strain Temecula1 / ATCC 700964).